We begin with the raw amino-acid sequence, 118 residues long: D-dopachrome decarboxylase (118 aa).

Pro2 is subject to N-acetylproline. Residue Lys33 is modified to N6-acetyllysine.

Belongs to the MIF family. In terms of assembly, homotrimer.

The protein resides in the cytoplasm. It carries out the reaction D-dopachrome + H(+) = 5,6-dihydroxyindole + CO2. In terms of biological role, tautomerization of D-dopachrome with decarboxylation to give 5,6-dihydroxyindole (DHI). In Bos taurus (Bovine), this protein is D-dopachrome decarboxylase (DDT).